Reading from the N-terminus, the 84-residue chain is Cytochrome b559 subunit alpha (84 aa).

A helical transmembrane segment spans residues 24–38; the sequence is IIHAVTLPAIFIAGF. Residue H26 participates in heme binding.

The protein belongs to the PsbE/PsbF family. Heterodimer of an alpha subunit and a beta subunit. PSII is composed of 1 copy each of membrane proteins PsbA, PsbB, PsbC, PsbD, PsbE, PsbF, PsbH, PsbI, PsbJ, PsbK, PsbL, PsbM, PsbT, PsbX, PsbY, Psb30/Ycf12, peripheral proteins PsbO, CyanoQ (PsbQ), PsbU, PsbV and a large number of cofactors. It forms dimeric complexes. The cofactor is heme b.

The protein resides in the cellular thylakoid membrane. Its function is as follows. This b-type cytochrome is tightly associated with the reaction center of photosystem II (PSII). PSII is a light-driven water:plastoquinone oxidoreductase that uses light energy to abstract electrons from H(2)O, generating O(2) and a proton gradient subsequently used for ATP formation. It consists of a core antenna complex that captures photons, and an electron transfer chain that converts photonic excitation into a charge separation. The sequence is that of Cytochrome b559 subunit alpha from Prochlorococcus marinus subsp. pastoris (strain CCMP1986 / NIES-2087 / MED4).